The sequence spans 241 residues: MNRCWALFLSLCCYLRLVSAEGDPIPEELYEMLSDHSIRSFDDLQRLLHGDSLDEDGAELDLNLTRSHSGGELESLSRGRRSLGSPTVAEPAVIAECKTRTEVSEISRRLIDRTNANFLVWPPCVEVQRCSGCCNNRNVQCRPTQVQDRKVQVKKIEIVRKKKIFKKATVTLVDHLACRCETVMARAVTRTPGSSQEQRAARTPQTRVTIRTVRVRRPPKGKHRKFKHTHDKTALKETLGA.

Residues 1–20 (MNRCWALFLSLCCYLRLVSA) form the signal peptide. The propeptide at 21–81 (EGDPIPEELY…ELESLSRGRR (61 aa)) is removed in mature form. Residue Asn-63 is glycosylated (N-linked (GlcNAc...) asparagine). 3 disulfides stabilise this stretch: Cys-97–Cys-141, Cys-130–Cys-178, and Cys-134–Cys-180. The propeptide at 191-241 (TPGSSQEQRAARTPQTRVTIRTVRVRRPPKGKHRKFKHTHDKTALKETLGA) is removed in mature form. Positions 217-230 (RPPKGKHRKFKHTH) are enriched in basic residues. A disordered region spans residues 217–241 (RPPKGKHRKFKHTHDKTALKETLGA).

Belongs to the PDGF/VEGF growth factor family. As to quaternary structure, antiparallel homodimer; disulfide-linked. Antiparallel heterodimer with PDGFA; disulfide-linked. The PDGFB homodimer interacts with PDGFRA and PDGFRB homodimers, and with heterodimers formed by PDGFRA and PDGFRB. The heterodimer composed of PDGFA and PDGFB interacts with PDGFRB homodimers, and with heterodimers formed by PDGFRA and PDGFRB. Interacts with XLKD1. Interacts with LRP1. Interacts with SORL1 (via the N-terminal ectodomain). Interacts with CD82; this interaction inhibits PDGFB-mediated signaling pathway.

It is found in the secreted. Growth factor that plays an essential role in the regulation of embryonic development, cell proliferation, cell migration, survival and chemotaxis. Potent mitogen for cells of mesenchymal origin. Required for normal proliferation and recruitment of pericytes and vascular smooth muscle cells in the central nervous system, skin, lung, heart and placenta. Required for normal blood vessel development, and for normal development of kidney glomeruli. Plays an important role in wound healing. Signaling is modulated by the formation of heterodimers with PDGFA. The protein is Platelet-derived growth factor subunit B (PDGFB) of Ovis aries (Sheep).